The sequence spans 313 residues: Small ribosomal subunit biogenesis GTPase RsgA (313 aa).

The 158-residue stretch at 80–237 folds into the CP-type G domain; the sequence is KVALRQVIVS…LIDTPGIKEF (158 aa). GTP is bound by residues 129–132 and 180–188; these read NKVD and GQSGVGKSS. Residues Cys-261, Cys-266, His-268, and Cys-274 each coordinate Zn(2+).

It belongs to the TRAFAC class YlqF/YawG GTPase family. RsgA subfamily. As to quaternary structure, monomer. Associates with 30S ribosomal subunit, binds 16S rRNA. Zn(2+) is required as a cofactor.

The protein localises to the cytoplasm. One of several proteins that assist in the late maturation steps of the functional core of the 30S ribosomal subunit. Helps release RbfA from mature subunits. May play a role in the assembly of ribosomal proteins into the subunit. Circularly permuted GTPase that catalyzes slow GTP hydrolysis, GTPase activity is stimulated by the 30S ribosomal subunit. This is Small ribosomal subunit biogenesis GTPase RsgA from Borrelia recurrentis (strain A1).